We begin with the raw amino-acid sequence, 555 residues long: Formate--tetrahydrofolate ligase (555 aa).

This sequence belongs to the formate--tetrahydrofolate ligase family.

It carries out the reaction (6S)-5,6,7,8-tetrahydrofolate + formate + ATP = (6R)-10-formyltetrahydrofolate + ADP + phosphate. It functions in the pathway one-carbon metabolism; tetrahydrofolate interconversion. This is Formate--tetrahydrofolate ligase from Porphyromonas gingivalis (strain ATCC BAA-308 / W83).